Here is a 475-residue protein sequence, read N- to C-terminus: Flotillin-like protein 4 (475 aa).

Coiled coils occupy residues 235–255 and 305–325; these read ENQR…KKAA and QYET…KEAE.

The protein belongs to the band 7/mec-2 family. Flotillin subfamily. Expressed in roots and nodules. Primarily expressed in vascular tissues. Upon induction of nodulation, expansion of expression in the root cortex in the region of elongating root hairs, which will eventually become colonized by bacteria. Expressed in the infection zone in nodules.

It is found in the membrane. Its subcellular location is the caveola. The protein localises to the cell membrane. Its function is as follows. May act as a scaffolding protein within caveolar membranes, functionally participating in formation of caveolae or caveolae-like vesicles. Required for normal infection threads initiation and elongation and nodulation. Probably involved in polar growth of the infection thread. The sequence is that of Flotillin-like protein 4 (FLOT4) from Medicago truncatula (Barrel medic).